The following is an 802-amino-acid chain: Ras GTPase-activating protein 4 (802 aa).

2 consecutive C2 domains span residues 1-105 (MAKR…SGWT) and 116-232 (VQGE…EGWF). Residues Asp21, Asp27, Asp74, Asp76, Ser79, Asp82, Asp149, Asp155, Asp202, Asp204, Ser207, and Asp210 each contribute to the Ca(2+) site. One can recognise a Ras-GAP domain in the interval 317–545 (GLAKDFLDLL…AQLKDFIMKL (229 aa)). The region spanning 565 to 672 (PPVKEGPLFI…WLSALRKAST (108 aa)) is the PH domain. Residues 674-710 (NRGLLRSYHPGIFRGDKWSCCHQKDKTDQGCDKTHSR) form a Btk-type zinc finger. 4 residues coordinate Zn(2+): His682, Cys693, Cys694, and Cys704.

Ca(2+) is required as a cofactor. Isoform 2 is expressed in osteoblasts.

It localises to the cytoplasm. It is found in the cytosol. The protein resides in the cell membrane. Ca(2+)-dependent Ras GTPase-activating protein, that switches off the Ras-MAPK pathway following a stimulus that elevates intracellular calcium. Functions as an adaptor for Cdc42 and Rac1 during FcR-mediated phagocytosis. Isoform 2 activates the Ras pathway and promotes RANKL shedding by modulating the expression of MMP14. The chain is Ras GTPase-activating protein 4 (Rasa4) from Mus musculus (Mouse).